A 109-amino-acid polypeptide reads, in one-letter code: Large ribosomal subunit protein uL18c (109 aa).

The protein belongs to the universal ribosomal protein uL18 family. Part of the 50S ribosomal subunit; contacts the 5S rRNA.

Its subcellular location is the plastid. It localises to the chloroplast. In terms of biological role, binds 5S rRNA, forms part of the central protuberance of the 50S subunit. In Cyanidioschyzon merolae (strain NIES-3377 / 10D) (Unicellular red alga), this protein is Large ribosomal subunit protein uL18c (rpl18).